Consider the following 737-residue polypeptide: MLKKILPVLITLAIVHNTPTAWAAEAPKTDSFYLPKSLDLSPLRLHNIESNPYGKDFNYAQQFKTLDLEAVKKDIKTVLTTSQDWWPADYGNYGPFFIRMAWHGAGTYRIYDGRGGADGGQQRFEPLNSWPDNANLDKARRLLWPIKKKYGAKISWGDLMVLTGNIALESMGFKTLGFAGGREDDWQSDLVYWGAGNKMLSDNRDKNGKLPKPLAATQMGLIYVNPEGPNGKPDPVAAAKDIREAFARMAMNDEETVALIAGGHTFGKAHGAASPEKCLGAAPGEAGLEQQGLGWANKCGSGNGKDTITSGLEGAWTTDPTHFTMQYLSNLYKHEWVLTKSPAGAWQWKPKNAANVVPDATDPTKFHPLMMFTTDIALKVDPEYKKITTRFLENPEEFKMAFARAWFKLTHRDMGPAARYLGDEVPKETFIWQDPLPAANYKMIDSADISELKDKILKTGLSDTKLIKTAWASASTFRGTDFRGGDNGARIRLAPQKDWPVNDPAELHSVLAALMEVQNNFNKDRSDGKKVSLSDLIVLGGNAAIEDAAKKAGYSISIPFTPGRTDASQEETDVSSFAVLEPTADGFRNYYDAKRNTLSPIASLIDRANKLELTVPEMTVLIGGLRVLDVNSGGSKAGVLTNTPGQLNNNFFVNLLDMSTKWTKSPKAEGYFDGYDRKTGKLKWTASSVDLVFGSNPELRAVAEVYASDDAKEKFVHDFTKVWEKVMNLDRFDIKNN.

An N-terminal signal peptide occupies residues 1 to 23; that stretch reads MLKKILPVLITLAIVHNTPTAWA. Residues 102 to 223 constitute a cross-link (tryptophyl-tyrosyl-methioninium (Trp-Tyr) (with M-249)); it reads WHGAGTYRIY…LAATQMGLIY (122 aa). His103 (proton acceptor) is an active-site residue. Positions 223-249 form a cross-link, tryptophyl-tyrosyl-methioninium (Tyr-Met) (with W-102); that stretch reads YVNPEGPNGKPDPVAAAKDIREAFARM. His264 contacts heme b.

It belongs to the peroxidase family. Peroxidase/catalase subfamily. As to quaternary structure, homodimer or homotetramer. The cofactor is heme b. Formation of the three residue Trp-Tyr-Met cross-link is important for the catalase, but not the peroxidase activity of the enzyme.

It catalyses the reaction H2O2 + AH2 = A + 2 H2O. It carries out the reaction 2 H2O2 = O2 + 2 H2O. Its function is as follows. Bifunctional enzyme with both catalase and broad-spectrum peroxidase activity. This Yersinia pseudotuberculosis serotype O:3 (strain YPIII) protein is Catalase-peroxidase.